The sequence spans 340 residues: Dihydroorotate dehydrogenase (quinone) (340 aa).

Residues 67 to 71 (AGFDK) and Thr-91 each bind FMN. Residue Lys-71 participates in substrate binding. A substrate-binding site is contributed by 116–120 (NRMGF). The FMN site is built by Asn-143 and Asn-176. Asn-176 provides a ligand contact to substrate. The active-site Nucleophile is the Ser-179. Asn-181 contributes to the substrate binding site. Lys-217 and Thr-245 together coordinate FMN. 246-247 (NT) contacts substrate. FMN contacts are provided by residues Gly-267, Gly-296, and 317 to 318 (YT).

It belongs to the dihydroorotate dehydrogenase family. Type 2 subfamily. In terms of assembly, monomer. FMN serves as cofactor.

The protein resides in the cell membrane. It catalyses the reaction (S)-dihydroorotate + a quinone = orotate + a quinol. It participates in pyrimidine metabolism; UMP biosynthesis via de novo pathway; orotate from (S)-dihydroorotate (quinone route): step 1/1. In terms of biological role, catalyzes the conversion of dihydroorotate to orotate with quinone as electron acceptor. This is Dihydroorotate dehydrogenase (quinone) from Christiangramia forsetii (strain DSM 17595 / CGMCC 1.15422 / KT0803) (Gramella forsetii).